The following is a 272-amino-acid chain: ATP synthase subunit a (272 aa).

The next 6 helical transmembrane spans lie at 41–61, 110–130, 143–165, 188–208, 222–242, and 243–263; these read VLNI…LSIF, FVWV…FPFI, VPSA…ILFY, VFFI…PISL, IFIL…NVPW, and AIFH…LTIV.

Belongs to the ATPase A chain family. F-type ATPases have 2 components, CF(1) - the catalytic core - and CF(0) - the membrane proton channel. CF(1) has five subunits: alpha(3), beta(3), gamma(1), delta(1), epsilon(1). CF(0) has three main subunits: a(1), b(2) and c(9-12). The alpha and beta chains form an alternating ring which encloses part of the gamma chain. CF(1) is attached to CF(0) by a central stalk formed by the gamma and epsilon chains, while a peripheral stalk is formed by the delta and b chains.

It localises to the cell membrane. Functionally, key component of the proton channel; it plays a direct role in the translocation of protons across the membrane. In Buchnera aphidicola subsp. Schizaphis graminum (strain Sg), this protein is ATP synthase subunit a.